The sequence spans 119 residues: Large ribosomal subunit protein bL20 (119 aa).

This sequence belongs to the bacterial ribosomal protein bL20 family.

Its function is as follows. Binds directly to 23S ribosomal RNA and is necessary for the in vitro assembly process of the 50S ribosomal subunit. It is not involved in the protein synthesizing functions of that subunit. This chain is Large ribosomal subunit protein bL20, found in Geobacillus thermodenitrificans (strain NG80-2).